A 277-amino-acid chain; its full sequence is Protein OPG166 (277 aa).

Residues Asn-29 and Asn-58 are each glycosylated (N-linked (GlcNAc...) asparagine; by host). A run of 5 helical transmembrane segments spans residues 124–144 (TMLM…EIAY), 156–176 (GILQ…AFLF), 186–206 (IIGL…KVFS), 219–239 (LIIY…GLSL), and 247–267 (LLLS…LFLV).

It belongs to the orthopoxvirus OPG166 protein family.

The protein resides in the host membrane. In terms of biological role, promotes, when overexpressed, the influx of extracellular Ca(2+), leading to membrane permeability and host cell necrosis. In Cynomys gunnisoni (Gunnison's prairie dog), this protein is Protein OPG166 (OPG166).